The primary structure comprises 122 residues: Large ribosomal subunit protein uL18 (122 aa).

Belongs to the universal ribosomal protein uL18 family. Part of the 50S ribosomal subunit; part of the 5S rRNA/L5/L18/L25 subcomplex. Contacts the 5S and 23S rRNAs.

This is one of the proteins that bind and probably mediate the attachment of the 5S RNA into the large ribosomal subunit, where it forms part of the central protuberance. The polypeptide is Large ribosomal subunit protein uL18 (Trichlorobacter lovleyi (strain ATCC BAA-1151 / DSM 17278 / SZ) (Geobacter lovleyi)).